The sequence spans 420 residues: Transcriptional adapter 2-beta (420 aa).

The ZZ-type zinc finger occupies 4-59; sequence LGKKYCVYCLAEVSPLRFRCTECQDIELCPECFSAGAEIGHHRRYHGYQLVDGGRF. Residues C9, C12, C23, C26, C32, C35, H45, and H49 each coordinate Zn(2+). Residues 65-118 form the SANT domain; that stretch reads EAEGGWTSREEQLLLDAIEQFGFGNWEDMAAHVGASRTPQEVMEHYVSMYIHGN. Positions 305–335 are disordered; the sequence is SAEYEAARHKREKRKENKNLAGSKRGKEDGK.

Interacts with GCN5L2, SMARCA4, SMARCE1 and PAX5. Component of the TFTC-HAT complex.

It is found in the nucleus. In terms of biological role, coactivates PAX5-dependent transcription together with either SMARCA4 or GCN5L2. This chain is Transcriptional adapter 2-beta (TADA2B), found in Homo sapiens (Human).